The following is a 157-amino-acid chain: MKESILDVLLYLFEHYFSEDADLIRDRDSLQNGLIQAGFSPTEINKAFDWLDALAAQRPSVAQARVDGPVRVYHGPELDKLDVECRGFLLYLEQHGILDADQRELVLDRAMALDQDELDLDDLKWVVLMVLFNQPGSEAAYAWMETQMFMDEPEPLH.

The protein belongs to the Smg family.

The chain is Protein Smg homolog from Stenotrophomonas maltophilia (strain R551-3).